Here is a 600-residue protein sequence, read N- to C-terminus: ATP-dependent lipid A-core flippase (600 aa).

5 helical membrane passes run 28-48, 80-100, 182-202, 267-287, and 295-315; these read IMAV…IAFI, IMLM…VANF, WKLS…ISVV, ISQP…LYAA, and DLTA…LQPI. One can recognise an ABC transmembrane type-1 domain in the interval 28-327; that stretch reads IMAVLGLITY…LTRVNAEFQR (300 aa). One can recognise an ABC transporter domain in the interval 359 to 596; that stretch reads LAFDNVTFAY…AGIYANLYQM (238 aa). 393–400 contributes to the ATP binding site; sequence GRSGSGKS.

It belongs to the ABC transporter superfamily. Lipid exporter (TC 3.A.1.106) family. Homodimer.

It is found in the cell inner membrane. It carries out the reaction ATP + H2O + lipid A-core oligosaccharideSide 1 = ADP + phosphate + lipid A-core oligosaccharideSide 2.. Its function is as follows. Involved in lipopolysaccharide (LPS) biosynthesis. Translocates lipid A-core from the inner to the outer leaflet of the inner membrane. Transmembrane domains (TMD) form a pore in the inner membrane and the ATP-binding domain (NBD) is responsible for energy generation. This Shewanella frigidimarina (strain NCIMB 400) protein is ATP-dependent lipid A-core flippase.